Consider the following 653-residue polypeptide: Endoglin (653 aa).

An N-terminal signal peptide occupies residues 1 to 26 (MDRGVLPLPITLLFVIYSFVPTTGLA). Residues 27–47 (ERVGCDLQPVDPTRGEVTFTT) are OR1, N-terminal part. Positions 27–337 (ERVGCDLQPV…SSCGGVFQTT (311 aa)) are required for interaction with GDF2. The Extracellular segment spans residues 27–581 (ERVGCDLQPV…IVSPDLSGKG (555 aa)). 7 disulfides stabilise this stretch: C31–C209, C54–C184, C244–C330, C350–C382, C363–C442, C394–C412, and C493–C549. The interval 48–201 (SQVSEGCVAQ…MGATLEWQPR (154 aa)) is OR2. Residues N89, N135, and N266 are each glycosylated (N-linked (GlcNAc...) asparagine). The tract at residues 202–330 (AQTPVQSCRL…SNVSLRASSC (129 aa)) is OR1, C-terminal part. Positions 270–282 (QILTTGEYSVKIF) are essential for interaction with GDF2. N-linked (GlcNAc...) asparagine glycans are attached at residues N307 and N322. The ZP domain maps to 363–510 (CGNQVMTLAL…GDMVELIQSR (148 aa)). Residues 582-606 (LVLPSVLGITFGAFLIGALLTAALW) form a helical membrane-spanning segment. Over 607 to 653 (YIYSHTRGPSKREPVVAVAAPASSESSSTNHSIGSTQSTPCSTSSMA) the chain is Cytoplasmic. A compositionally biased stretch (low complexity) spans 624–634 (VAAPASSESSS). The disordered stretch occupies residues 624-653 (VAAPASSESSSTNHSIGSTQSTPCSTSSMA). The segment covering 635-653 (TNHSIGSTQSTPCSTSSMA) has biased composition (polar residues). Phosphoserine; by TGFBR1 is present on residues S641 and S644.

In terms of assembly, homodimer; disulfide-linked. Forms a heteromeric complex with the signaling receptors for transforming growth factor-beta: TGFBR1 and/or TGFBR2. Interacts with TGFB1. It is able to bind TGFB1 and TGFB2 with high affinity, but not TGFB3. Interacts with GDF2, forming a heterotetramer with a 2:2 stoichiometry. Interacts with ACVRL1. Can form a heteromeric complex with GDF2 and ACVRL1. Interacts with BMP10. Interacts with DYNLT4. Interacts with ARRB2. In terms of tissue distribution, detected on blood vessels (at protein level). Detected on adult pulmonary artery, capillaries supporting the heart muscle and lung alveolar capillary endothelial cells. Endoglin is restricted to endothelial cells in all tissues except bone marrow and is also found in stromal cells within the connective tissue of intestine, stomach, heart, skeletal muscle, uterus, ovary, oviduct, testis and thymus.

The protein localises to the cell membrane. Its function is as follows. Vascular endothelium glycoprotein that plays an important role in the regulation of angiogenesis. Required for normal structure and integrity of adult vasculature. Regulates the migration of vascular endothelial cells. Required for normal extraembryonic angiogenesis and for embryonic heart development. May regulate endothelial cell shape changes in response to blood flow, which drive vascular remodeling and establishment of normal vascular morphology during angiogenesis. May play a role in the binding of endothelial cells to integrins. Acts as a TGF-beta coreceptor and is involved in the TGF-beta/BMP signaling cascade that ultimately leads to the activation of SMAD transcription factors. Required for GDF2/BMP9 signaling through SMAD1 in endothelial cells and modulates TGFB1 signaling through SMAD3. This is Endoglin (Eng) from Mus musculus (Mouse).